The sequence spans 471 residues: N-succinylglutamate 5-semialdehyde dehydrogenase (471 aa).

207-212 provides a ligand contact to NAD(+); sequence GSAHAG. Active-site residues include Glu230 and Cys264.

The protein belongs to the aldehyde dehydrogenase family. AstD subfamily.

The enzyme catalyses N-succinyl-L-glutamate 5-semialdehyde + NAD(+) + H2O = N-succinyl-L-glutamate + NADH + 2 H(+). Its pathway is amino-acid degradation; L-arginine degradation via AST pathway; L-glutamate and succinate from L-arginine: step 4/5. In terms of biological role, catalyzes the NAD-dependent reduction of succinylglutamate semialdehyde into succinylglutamate. The protein is N-succinylglutamate 5-semialdehyde dehydrogenase of Novosphingobium aromaticivorans (strain ATCC 700278 / DSM 12444 / CCUG 56034 / CIP 105152 / NBRC 16084 / F199).